The following is a 661-amino-acid chain: Phospholipid:diacylglycerol acyltransferase (661 aa).

The disordered stretch occupies residues 1 to 71 (MGTLFRRNVQ…FDRKRDGNGR (71 aa)). The Cytoplasmic portion of the chain corresponds to 1-80 (MGTLFRRNVQ…RKRWRDSRRL (80 aa)). Residues 34-48 (HIHHQQGLGHKRRRG) show a composition bias toward basic residues. 2 short sequence motifs (bipartite nuclear localization signal) span residues 43–50 (HKRRRGIS) and 64–71 (RKRDGNGR). Over residues 54–70 (KRNERGKDFDRKRDGNG) the composition is skewed to basic and acidic residues. The helical transmembrane segment at 81–101 (IFILGAFLGVLLPFSFGAYHV) threads the bilayer. The Lumenal portion of the chain corresponds to 102–661 (HNSDSDLFDN…QWVSQMPFPM (560 aa)). Residue Gln162 coordinates substrate. The GHSXG lipase motif signature appears at 322-326 (GHSMG). The active-site Acyl-ester intermediate is the Ser324. Residue Met325 coordinates substrate. N-linked (GlcNAc...) asparagine glycans are attached at residues Asn453, Asn461, and Asn469. Catalysis depends on Asp567, which acts as the Charge relay system. Asn594 carries N-linked (GlcNAc...) asparagine glycosylation. The active-site Charge relay system is His618.

Belongs to the AB hydrolase superfamily. Lipase family.

Its subcellular location is the endoplasmic reticulum membrane. The protein localises to the nucleus inner membrane. The enzyme catalyses a glycerophospholipid + a 1,2-diacyl-sn-glycerol = a monoacylglycerophospholipid + a triacyl-sn-glycerol. It catalyses the reaction a 1-acyl-sn-glycerol + a 1,2-diacyl-sn-glycero-3-phosphocholine = a 1-acyl-sn-glycero-3-phosphocholine + a 1,2-diacyl-sn-glycerol. It carries out the reaction 1,2-di-(9Z-octadecenoyl)-sn-glycero-3-phosphoethanolamine + 1,2-di-(9Z-octadecenoyl)-sn-glycerol = 1-(9Z-octadecenoyl)-sn-glycero-3-phosphoethanolamine + 1,2,3-tri-(9Z-octadecenoyl)-glycerol. The catalysed reaction is 1,2-di-(9Z-octadecenoyl)-sn-glycerol + 1,2-di-(9Z-octadecenoyl)-sn-glycero-3-phosphocholine = 1,2,3-tri-(9Z-octadecenoyl)-glycerol + 1-(9Z-octadecenoyl)-sn-glycero-3-phosphocholine. The enzyme catalyses 1-(9Z-octadecenoyl)-sn-glycerol + 1,2-di-(9Z-octadecenoyl)-sn-glycero-3-phosphocholine = di-(9Z)-octadecenoylglycerol + 1-(9Z-octadecenoyl)-sn-glycero-3-phosphocholine. It catalyses the reaction 2-(9Z-octadecenoyl)-glycerol + 1,2-di-(9Z-octadecenoyl)-sn-glycero-3-phosphocholine = 1,2-di-(9Z-octadecenoyl)-glycerol + 1-(9Z-octadecenoyl)-sn-glycero-3-phosphocholine. It carries out the reaction 1-(9Z-octadecenoyl)-2-hexadecanoyl-sn-glycero-3-phosphoethanolamine + 1,2-di-(9Z-octadecenoyl)-sn-glycerol = 1,2-di-(9Z)-octadecenoyl-3-hexadecanoyl-sn-glycerol + 1-(9Z-octadecenoyl)-sn-glycero-3-phosphoethanolamine. The catalysed reaction is 1-(9Z-octadecenoyl)-2-octadecanoyl-sn-glycero-3-phosphoethanolamine + 1,2-di-(9Z-octadecenoyl)-sn-glycerol = 1,2-di-(9Z)-octadecenoyl-3-octadecanoyl-sn-glycerol + 1-(9Z-octadecenoyl)-sn-glycero-3-phosphoethanolamine. The enzyme catalyses 1-(9Z)-octadecenoyl-2-(9Z,12Z)-octadecadienoyl-sn-glycero-3-phosphoethanolamine + 1,2-di-(9Z-octadecenoyl)-sn-glycerol = 1,2-di-(9Z)-octadecenoyl-3-(9Z,12Z)-octadecadienoyl-sn-glycerol + 1-(9Z-octadecenoyl)-sn-glycero-3-phosphoethanolamine. In terms of biological role, catalyzes triacylglycerol (TAG) formation by an acyl-CoA independent pathway. The enzyme specifically transfers acyl groups from the sn-2 position of a phospholipid to diacylglycerol (DAG), thus forming an sn-1-lysophospholipid. The preferred acyl donors are phosphatidylethanolamine (PE) and phosphatidylcholine (PC). Also capable of using broad acyl donors such as phosphatidic acid (PA), phosphatidylserine (PS), phosphatidylglycerol (PG) and phosphatidylinositol (PI), as well as monogalactosyldiacylglycerol (MGDG), digalactosyldiacylglycerol (DGDG), and acyl-CoA, and it is more likely to use unsaturated acyl donors. As acyl acceptors, it prefers 1,2- over 1,3-diacylglycerol (DAG). Additionally, has esterification activity that can utilize methanol as acyl acceptor to generate fatty acid methyl esters (FAME). Can also utilize ceramide instead of DAG, acylating the ceramides by attaching a fatty acid to the hydroxy group on the first carbon atom of the long-chain base to produce 1-O-acylceramides. Involved in lipid particle synthesis from the endoplasmic reticulum, promoting localized TAG production at discrete ER subdomains. Relocates from the endoplasmic reticulum to a subdomain of the inner nuclear membrane upon nutrient starvation, where it provides a site of TAG synthesis, which is coupled with nuclear membrane remodeling. The protein is Phospholipid:diacylglycerol acyltransferase of Saccharomyces cerevisiae (strain ATCC 204508 / S288c) (Baker's yeast).